Reading from the N-terminus, the 725-residue chain is Ribosomal RNA large subunit methyltransferase K/L (725 aa).

Residues 46–157 (VAYRLCLWSR…RGEAVLSLDL (112 aa)) form the THUMP domain.

It belongs to the methyltransferase superfamily. RlmKL family.

Its subcellular location is the cytoplasm. It catalyses the reaction guanosine(2445) in 23S rRNA + S-adenosyl-L-methionine = N(2)-methylguanosine(2445) in 23S rRNA + S-adenosyl-L-homocysteine + H(+). It carries out the reaction guanosine(2069) in 23S rRNA + S-adenosyl-L-methionine = N(2)-methylguanosine(2069) in 23S rRNA + S-adenosyl-L-homocysteine + H(+). In terms of biological role, specifically methylates the guanine in position 2445 (m2G2445) and the guanine in position 2069 (m7G2069) of 23S rRNA. The chain is Ribosomal RNA large subunit methyltransferase K/L from Ectopseudomonas mendocina (strain ymp) (Pseudomonas mendocina).